Reading from the N-terminus, the 147-residue chain is Large ribosomal subunit protein uL15 (147 aa).

Basic and acidic residues predominate over residues 1–13; it reads MKLENLKSKEGSR. Residues 1–54 form a disordered region; that stretch reads MKLENLKSKEGSRHKTKRVGRGFGSGIGKTSTRGSKGQKSRKSGHTRPGFEGGQ. Residues 36–45 are compositionally biased toward basic residues; sequence KGQKSRKSGH.

Belongs to the universal ribosomal protein uL15 family. Part of the 50S ribosomal subunit.

Functionally, binds to the 23S rRNA. This Malacoplasma penetrans (strain HF-2) (Mycoplasma penetrans) protein is Large ribosomal subunit protein uL15.